The chain runs to 707 residues: SPX domain-containing membrane protein At4g11810 (707 aa).

The 144-residue stretch at 2-145 (VAFGKKLKER…GYRFTNYYVK (144 aa)) folds into the SPX domain. 6 consecutive transmembrane segments (helical) span residues 252–272 (FMSL…TYII), 283–303 (LGAA…AQLF), 320–340 (LIFS…AYDF), 342–361 (SLAL…ARAV), 380–400 (AGFV…AGLL), and 416–436 (LPGW…AISF). Positions 481–498 (EETEHDEEDDGDGSEESS) are enriched in acidic residues. Positions 481-503 (EETEHDEEDDGDGSEESSDDSRK) are disordered. 5 consecutive transmembrane segments (helical) span residues 523–543 (LLIY…SSVV), 557–577 (IFLF…GSYI), 586–606 (ILLA…HVVI), 614–634 (VISG…NLSL), and 679–699 (MLLN…ILAT).

The protein belongs to the major facilitator superfamily.

The protein localises to the membrane. The polypeptide is SPX domain-containing membrane protein At4g11810 (Arabidopsis thaliana (Mouse-ear cress)).